Reading from the N-terminus, the 447-residue chain is Asparagine--tRNA ligase (447 aa).

The protein belongs to the class-II aminoacyl-tRNA synthetase family. As to quaternary structure, homodimer.

Its subcellular location is the cytoplasm. The enzyme catalyses tRNA(Asn) + L-asparagine + ATP = L-asparaginyl-tRNA(Asn) + AMP + diphosphate + H(+). The protein is Asparagine--tRNA ligase of Lactococcus lactis subsp. cremoris (strain SK11).